We begin with the raw amino-acid sequence, 282 residues long: Parvulin-like PPIase (282 aa).

A signal peptide spans 1–20 (MKKLSVIFLSVSMLSGIAFA). A PpiC domain is found at 138–231 (KEQIKVAHIL…FGWHIIKVLE (94 aa)).

The protein belongs to the PpiC/parvulin rotamase family.

Its subcellular location is the cell outer membrane. It carries out the reaction [protein]-peptidylproline (omega=180) = [protein]-peptidylproline (omega=0). The protein is Parvulin-like PPIase (plp) of Rickettsia felis (strain ATCC VR-1525 / URRWXCal2) (Rickettsia azadi).